The following is a 531-amino-acid chain: MTLTETSLSHNAEEGKDEGGRLQQYKNLTKHEELRRRRTECSVEIRKQKGADMMMKRRNIVDVDEGGNSESELEEPEKISHQQSSTRLSNDEIRAILSNNPSEDDMVRCFESLRKSLSKTKNPPIDEVIHCGLLQALVQALSVENERVQYEAAWALTNIVSGSTEQTIAAVEAGVTIPLIHLSVHQSAQISEQALWAVANIAGDSSQLRDYVIKCHGVEALMHLMEKVDQLGDSHVRTIAWAFSNMCRHKNPHAPLEVLRVLSKGLVKLVQHTDRQVRQDACWAVSYLTDGPDEQIELARESGVLPHVVAFFKEAENLVAPALRTLGNVATGNDSLTQAVIDLGSLDEILPLMEKTRSSSIVKECCWLVSNIIAGTQKQIQAVLDANLLPVLINVLKSGDHKCQFEASWALSNLAQGGTNRQVVAMLEDNVVPALCQALLQTNTDMLNNTLETLYTLMLTVQNGYPHKVDILHDQVEENGGLDSLERLQESQSEQIYTQAYRIITQFFTDDDAGEKESHENADPQDNKWSF.

Residues Met-1–His-10 show a composition bias toward polar residues. Residues Met-1 to Leu-88 are disordered. An IBB domain is found at Glu-5–Gly-67. 2 stretches are compositionally biased toward basic and acidic residues: residues Asn-11–Gly-20 and Thr-29–Gly-50. Over residues Asp-62 to Glu-75 the composition is skewed to acidic residues. 7 ARM repeats span residues Asn-122–Ser-161, Thr-164–Gly-203, Lys-250–Asp-290, Asp-293–Thr-331, Asp-334–Ala-374, Gln-377–Gln-416, and Asn-420–Leu-459. Residues Asp-511–Phe-531 are disordered. Residues Glu-515–Phe-531 show a composition bias toward basic and acidic residues.

The protein belongs to the importin alpha family. In terms of assembly, forms a complex with an importin beta subunit. Interacts with akir-1. Germline tissues. Expressed exclusively in germ line cells from the early embryonic through adult stages.

The protein resides in the cytoplasm. It localises to the nucleus. It is found in the nucleus envelope. In terms of biological role, nuclear transport receptor that mediates nuclear import of proteins, and which is involved in sister chromatid cohesion. Binds specifically and directly to substrates containing either a simple or bipartite nuclear localization signals (NLS) motif. Promotes docking of import substrates to the nuclear envelope. Together with akir-1 adapter, required for the import and load of cohesin complex proteins in meiotic nuclei. The polypeptide is Importin subunit alpha-2 (Caenorhabditis elegans).